Reading from the N-terminus, the 202-residue chain is NADH-quinone oxidoreductase subunit C (202 aa).

Belongs to the complex I 30 kDa subunit family. NDH-1 is composed of 14 different subunits. Subunits NuoB, C, D, E, F, and G constitute the peripheral sector of the complex.

It localises to the cell inner membrane. The enzyme catalyses a quinone + NADH + 5 H(+)(in) = a quinol + NAD(+) + 4 H(+)(out). NDH-1 shuttles electrons from NADH, via FMN and iron-sulfur (Fe-S) centers, to quinones in the respiratory chain. The immediate electron acceptor for the enzyme in this species is believed to be ubiquinone. Couples the redox reaction to proton translocation (for every two electrons transferred, four hydrogen ions are translocated across the cytoplasmic membrane), and thus conserves the redox energy in a proton gradient. In Brucella canis (strain ATCC 23365 / NCTC 10854 / RM-666), this protein is NADH-quinone oxidoreductase subunit C.